Reading from the N-terminus, the 380-residue chain is Probable peptidoglycan glycosyltransferase FtsW (380 aa).

The next 10 membrane-spanning stretches (helical) occupy residues Leu-14–Ile-34, Ile-52–Phe-72, Ile-79–His-99, Met-112–Ser-131, Phe-141–Glu-161, Pro-162–Gly-182, Phe-188–Tyr-208, Ile-268–Ile-288, Ile-304–Ile-324, and Pro-341–Ile-361.

Belongs to the SEDS family. FtsW subfamily.

It localises to the cell membrane. It catalyses the reaction [GlcNAc-(1-&gt;4)-Mur2Ac(oyl-L-Ala-gamma-D-Glu-L-Lys-D-Ala-D-Ala)](n)-di-trans,octa-cis-undecaprenyl diphosphate + beta-D-GlcNAc-(1-&gt;4)-Mur2Ac(oyl-L-Ala-gamma-D-Glu-L-Lys-D-Ala-D-Ala)-di-trans,octa-cis-undecaprenyl diphosphate = [GlcNAc-(1-&gt;4)-Mur2Ac(oyl-L-Ala-gamma-D-Glu-L-Lys-D-Ala-D-Ala)](n+1)-di-trans,octa-cis-undecaprenyl diphosphate + di-trans,octa-cis-undecaprenyl diphosphate + H(+). The protein operates within cell wall biogenesis; peptidoglycan biosynthesis. Functionally, peptidoglycan polymerase that is essential for cell division. In Buchnera aphidicola subsp. Baizongia pistaciae (strain Bp), this protein is Probable peptidoglycan glycosyltransferase FtsW.